The following is a 701-amino-acid chain: Glycine--tRNA ligase beta subunit (701 aa).

This sequence belongs to the class-II aminoacyl-tRNA synthetase family. In terms of assembly, tetramer of two alpha and two beta subunits.

The protein localises to the cytoplasm. The enzyme catalyses tRNA(Gly) + glycine + ATP = glycyl-tRNA(Gly) + AMP + diphosphate. The protein is Glycine--tRNA ligase beta subunit of Anaeromyxobacter sp. (strain K).